Reading from the N-terminus, the 416-residue chain is N-acetylmuramoyl-L-alanine amidase AmiC (416 aa).

An N-terminal signal peptide occupies residues 1 to 26 (MIKLTRRQIIRRTAGTLFALSPIASA). The tract at residues 166 to 191 (RGSPEADLAQNTTPQPGRGRNGRRPV) is disordered. Residues 192 to 405 (IMLDPGHGGE…CAQSIASGVQ (214 aa)) enclose the MurNAc-LAA domain.

This sequence belongs to the N-acetylmuramoyl-L-alanine amidase 3 family.

The protein resides in the periplasm. It catalyses the reaction Hydrolyzes the link between N-acetylmuramoyl residues and L-amino acid residues in certain cell-wall glycopeptides.. In terms of biological role, cell-wall hydrolase involved in septum cleavage during cell division. The protein is N-acetylmuramoyl-L-alanine amidase AmiC (amiC) of Neisseria meningitidis serogroup B (strain ATCC BAA-335 / MC58).